A 269-amino-acid polypeptide reads, in one-letter code: Photosystem I assembly factor PSA3, chloroplastic (269 aa).

A chloroplast-targeting transit peptide spans 1 to 37 (MGALPVAHSLALTAAFLPCRRPAAHGRCRRRRYRAVV).

Its subcellular location is the plastid. It localises to the chloroplast thylakoid membrane. In terms of biological role, nuclear genome-encoded factor required for the accumulation of photosystem I (PSI). Functions as a PSI biogenesis factor. Cooperates with PYG7 to promote the stable assembly of PSI in the thylakoid membrane. May target primarily the PsaC subunit. Does not seem to be required for the expression of chloroplast genes encoding PSI subunits. The chain is Photosystem I assembly factor PSA3, chloroplastic from Zea mays (Maize).